The primary structure comprises 90 residues: DNA-binding protein HU (90 aa).

Threonine 4 is subject to Phosphothreonine. Positions 56 to 90 (AARKGRNPQTGEEMEIPASKVPAFKPGKALKDAVK) are disordered.

The protein belongs to the bacterial histone-like protein family. As to quaternary structure, homodimer.

Histone-like DNA-binding protein which is capable of wrapping DNA to stabilize it, and thus to prevent its denaturation under extreme environmental conditions. This is DNA-binding protein HU (hup) from Geobacillus stearothermophilus (Bacillus stearothermophilus).